The following is a 1692-amino-acid chain: MSSAVGPRGPRPPTVPPPMQELPDLSHLTEEERNIIMAVMDRQKEEEEKEEAMLKCVVRDMAKPAACKTPRNAENQPHQPSPRLHQQFESYKEQVRKIGEEARRYQGEHKDDAPTCGICHKTKFADGCGHLCSYCRTKFCARCGGRVSLRSNNEDKVVMWVCNLCRKQQEILTKSGAWFFGSGPQQTSQDGTLSDTATGAGSEVPREKKARLQERSRSQTPLSTAAASSQDAAPPSAPPDRSKGAEPSQQALGPEQKQASSRSRSEPPRERKKTPGLSEQNGKGALKSERKRVPKTSAQPVEGAVEERERKERRESRRLEKGRSQDYPDTPEKRDEGKAADEEKQRKEEDYQTRYRSDPNLARYPVKPPPEEQQMRMHARVSRARHERRHSDVALPRTEAGAALPEGKAGKRAPAAARASPPDSPRAYSAERTAETRAPGAKQLTNHSPPAPRHGPVPAEAPELKAQEPLRKQSRLDPSSAVLMRKAKREKVETMLRNDSLSSDQSESVRPSPPKPHRSKRGGKKRQMSVSSSEEEGVSTPEYTSCEDVELESESVSEKGDLDYYWLDPATWHSRETSPISSHPVTWQPSKEGDRLIGRVILNKRTTMPKDSGALLGLKVVGGKMTDLGRLGAFITKVKKGSLADVVGHLRAGDEVLEWNGKPLPGATNEEVYNIILESKSEPQVEIIVSRPIGDIPRIPESSHPPLESSSSSFESQKMERPSISVISPTSPGALKDAPQVLPGQLSVKLWYDKVGHQLIVNVLQATDLPARVDGRPRNPYVKMYFLPDRSDKSKRRTKTVKKILEPKWNQTFVYSHVHRRDFRERMLEITVWDQPRVQEEESEFLGEILIELETALLDDEPHWYKLQTHDESSLPLPQPSPFMPRRHIHGESSSKKLQRSQRISDSDISDYEVDDGIGVVPPVGYRSSARESKSTTLTVPEQQRTTHHRSRSVSPHRGNDQGKPRSRLPNVPLQRSLDEIHPTRRSRSPTRHHDASRSPVDHRTRDVDSQYLSEQDSELLMLPRAKRGRSAECLHTTRHLVRHYKTLPPKMPLLQSSSHWNIYSSILPAHTKTKSVTRQDISLHHECFNSTVLRFTDEILVSELQPFLDRARSASTNCLRPDTSLHSPERERGRWSPSLDRRRPPSPRIQIQHASPENDRHSRKSERSSIQKQTRKGTASDAERVLPTCLSRRGHAAPRATDQPVIRGKHPARSRSSEHSSIRTLCSMHHLVPGGSAPPSPLLTRMHRQRSPTQSPPADTSFSSRRGRQLPQVPVRSGSIEQASLVVEERTRQMKMKVHRFKQTTGSGSSQELDREQYSKYNIHKDQYRSCDNVSAKSSDSDVSDVSAISRTSSASRLSSTSFMSEQSERPRGRISSFTPKMQGRRMGTSGRSIMKSTSVSGEMYTLEHNDGSQSDTAVGTVGAGGKKRRSSLSAKVVAIVSRRSRSTSQLSQTESGHKKLKSTIQRSTETGMAAEMRKMVRQPSRESTDGSINSYSSEGNLIFPGVRLGADSQFSDFLDGLGPAQLVGRQTLATPAMGDIQIGMEDKKGQLEVEVIRARSLTQKPGSKSTPAPYVKVYLLENGACIAKKKTRIARKTLDPLYQQSLVFDESPQGKVLQVIVWGDYGRMDHKCFMGVAQILLEELDLSSMVIGWYKLFPPSSLVDPTLTPLTRRASQSSLESSTGPPCIRS.

Residues 1–26 form a disordered region; it reads MSSAVGPRGPRPPTVPPPMQELPDLS. Over residues 9 to 20 the composition is skewed to pro residues; the sequence is GPRPPTVPPPMQ. In terms of domain architecture, RabBD spans 22-182; it reads LPDLSHLTEE…TKSGAWFFGS (161 aa). Residues 110 to 170 form an FYVE-type zinc finger; it reads KDDAPTCGIC…VCNLCRKQQE (61 aa). Zn(2+)-binding residues include cysteine 116, cysteine 119, cysteine 132, cysteine 135, cysteine 140, cysteine 143, cysteine 162, and cysteine 165. Residues 183–199 show a composition bias toward polar residues; the sequence is GPQQTSQDGTLSDTATG. Residues 183–555 are disordered; the sequence is GPQQTSQDGT…CEDVELESES (373 aa). A compositionally biased stretch (basic and acidic residues) spans 204 to 217; that stretch reads VPREKKARLQERSR. The segment covering 223–234 has biased composition (low complexity); the sequence is STAAASSQDAAP. A compositionally biased stretch (basic and acidic residues) spans 305 to 357; the sequence is VEERERKERRESRRLEKGRSQDYPDTPEKRDEGKAADEEKQRKEEDYQTRYRS. Residues 377-388 are compositionally biased toward basic residues; sequence MHARVSRARHER. Low complexity predominate over residues 412 to 430; it reads RAPAAARASPPDSPRAYSA. A compositionally biased stretch (basic and acidic residues) spans 462-475; sequence PELKAQEPLRKQSR. Positions 497–509 are enriched in polar residues; sequence RNDSLSSDQSESV. Serine 500 is modified (phosphoserine). Over residues 515–527 the composition is skewed to basic residues; sequence KPHRSKRGGKKRQ. Positions 545 to 555 are enriched in acidic residues; that stretch reads SCEDVELESES. Serine 578 is subject to Phosphoserine. One can recognise a PDZ domain in the interval 605 to 691; sequence RTTMPKDSGA…EPQVEIIVSR (87 aa). The disordered stretch occupies residues 698 to 732; that stretch reads RIPESSHPPLESSSSSFESQKMERPSISVISPTSP. Over residues 700–716 the composition is skewed to low complexity; that stretch reads PESSHPPLESSSSSFES. Residues serine 728 and serine 731 each carry the phosphoserine modification. Residues 742-865 form the C2 1 domain; sequence LPGQLSVKLW…ALLDDEPHWY (124 aa). Residues 870–1013 are disordered; that stretch reads HDESSLPLPQ…RTRDVDSQYL (144 aa). Serine 881 bears the Phosphoserine mark. Positions 935–944 are enriched in polar residues; sequence STTLTVPEQQ. Phosphoserine is present on serine 977. Residues 992-1009 are compositionally biased toward basic and acidic residues; the sequence is RHHDASRSPVDHRTRDVD. At serine 1031 the chain carries Phosphoserine. Disordered stretches follow at residues 1118 to 1222 and 1235 to 1278; these read NCLR…EHSS and GGSA…PVRS. Composition is skewed to basic and acidic residues over residues 1128 to 1144 and 1157 to 1170; these read SPERERGRWSPSLDRRR and PENDRHSRKSERSS. A Phosphoserine modification is found at serine 1252. The segment covering 1252-1265 has biased composition (polar residues); the sequence is SPTQSPPADTSFSS. Threonine 1254 is modified (phosphothreonine). Phosphoserine occurs at positions 1256, 1308, 1310, 1311, 1339, 1340, and 1342. Disordered regions lie at residues 1332–1394, 1408–1428, and 1445–1495; these read CDNV…SGRS, LEHNDGSQSDTAVGTVGAGGK, and RSRS…GSIN. The segment covering 1345 to 1366 has biased composition (low complexity); it reads SDVSAISRTSSASRLSSTSFMS. Serine 1416 is modified (phosphoserine). Basic and acidic residues predominate over residues 1477-1490; the sequence is EMRKMVRQPSREST. One can recognise a C2 2 domain in the interval 1538–1656; sequence AMGDIQIGME…DLSSMVIGWY (119 aa). 4 positions are modified to phosphoserine: serine 1677, serine 1680, serine 1683, and serine 1692.

In terms of assembly, binds RAB3A, RAB3B and RAB3D that have been activated by GTP-binding. Interacts with RAB3C, RAB10, RAB26 and RAB37. Binds UNC13A. Interacts with TSPOAP1 and RIMBP2. Interacts with PPFIA3 and PPFIA4. Interacts with ERC1. Binds SNAP25, SYT1 and CACNA1B. Interaction with SYT1 is enhanced by calcium ions. Interaction with SNAP25 is weaker in the presence of calcium ions. Post-translationally, phosphorylated by BRSK1. Expressed in melanocytes. Detected in brain and retina.

The protein localises to the cell membrane. Its subcellular location is the synapse. The protein resides in the presynaptic cell membrane. Its function is as follows. Rab effector involved in exocytosis. May act as scaffold protein that regulates neurotransmitter release at the active zone. Essential for maintaining normal probability of neurotransmitter release and for regulating release during short-term synaptic plasticity. Plays a role in dendrite formation by melanocytes. The sequence is that of Regulating synaptic membrane exocytosis protein 1 (RIMS1) from Homo sapiens (Human).